The following is a 249-amino-acid chain: Elongator complex protein 6 homolog (249 aa).

The protein belongs to the ELP6 family. In terms of assembly, component of the elongator complex.

Its subcellular location is the cytoplasm. The protein resides in the nucleus. It functions in the pathway tRNA modification; 5-methoxycarbonylmethyl-2-thiouridine-tRNA biosynthesis. Component of the elongator complex which is required for multiple tRNA modifications, including mcm5U (5-methoxycarbonylmethyl uridine), mcm5s2U (5-methoxycarbonylmethyl-2-thiouridine), and ncm5U (5-carbamoylmethyl uridine). The elongator complex catalyzes formation of carboxymethyluridine in the wobble base at position 34 in tRNAs. The protein is Elongator complex protein 6 homolog of Schizosaccharomyces pombe (strain 972 / ATCC 24843) (Fission yeast).